Here is a 391-residue protein sequence, read N- to C-terminus: Saxitoxin and tetrodotoxin-binding protein 2 (391 aa).

The first 20 residues, 1–20 (MGAVPGVVLLLMLAVLGIRA), serve as a signal peptide directing secretion. Tandem repeats lie at residues 24–202 (PEEC…HKKS) and 203–391 (PEEC…PEQD). 8 N-linked (GlcNAc...) asparagine glycosylation sites follow: N41, N54, N63, N97, N234, N268, N277, and N307.

In terms of assembly, homodimer or heterodimer of PSTBP1 and PSTBP2. Glycosylated.

The protein resides in the secreted. Its function is as follows. Binds both saxitoxin and tetradotoxin. May play a role in toxin accumulation and/or excretion. In Takifugu pardalis (Panther puffer), this protein is Saxitoxin and tetrodotoxin-binding protein 2 (psbp2).